A 214-amino-acid chain; its full sequence is 3,4-dihydroxy-2-butanone 4-phosphate synthase (214 aa).

D-ribulose 5-phosphate is bound by residues 40–41, Asp45, 153–157, and Glu177; these read RE and RRGHT. Glu41 contributes to the Mg(2+) binding site. A Mg(2+)-binding site is contributed by His156.

Belongs to the DHBP synthase family. As to quaternary structure, homodimer. The cofactor is Mg(2+). It depends on Mn(2+) as a cofactor.

The catalysed reaction is D-ribulose 5-phosphate = (2S)-2-hydroxy-3-oxobutyl phosphate + formate + H(+). Its pathway is cofactor biosynthesis; riboflavin biosynthesis; 2-hydroxy-3-oxobutyl phosphate from D-ribulose 5-phosphate: step 1/1. In terms of biological role, catalyzes the conversion of D-ribulose 5-phosphate to formate and 3,4-dihydroxy-2-butanone 4-phosphate. This Rhodospirillum rubrum (strain ATCC 11170 / ATH 1.1.1 / DSM 467 / LMG 4362 / NCIMB 8255 / S1) protein is 3,4-dihydroxy-2-butanone 4-phosphate synthase.